The sequence spans 712 residues: Polyribonucleotide nucleotidyltransferase (712 aa).

D487 and D493 together coordinate Mg(2+). Residues P554–I613 form the KH domain. One can recognise an S1 motif domain in the interval G623–K691.

Belongs to the polyribonucleotide nucleotidyltransferase family. Mg(2+) is required as a cofactor.

It is found in the cytoplasm. The catalysed reaction is RNA(n+1) + phosphate = RNA(n) + a ribonucleoside 5'-diphosphate. Involved in mRNA degradation. Catalyzes the phosphorolysis of single-stranded polyribonucleotides processively in the 3'- to 5'-direction. This Bacillus cereus (strain ATCC 10987 / NRS 248) protein is Polyribonucleotide nucleotidyltransferase.